The primary structure comprises 378 residues: Alcohol dehydrogenase (378 aa).

4 residues coordinate Fe cation: Asp-195, His-199, His-262, and His-274.

It belongs to the iron-containing alcohol dehydrogenase family. It depends on Fe(2+) as a cofactor. The cofactor is Mn(2+).

It catalyses the reaction a primary alcohol + NAD(+) = an aldehyde + NADH + H(+). The enzyme catalyses butan-1-ol + NAD(+) = butanal + NADH + H(+). It carries out the reaction hexan-1-ol + NAD(+) = hexanal + NADH + H(+). The catalysed reaction is ethanol + NAD(+) = acetaldehyde + NADH + H(+). Functionally, thermostable type III alcohol dehydrogenase. For oxidation activity, the best substrates are 1-butanol and 1-hexanol, followed by ethanol. Shows lower activity with ethylene glycol, isopentanol, isopropanol and glycerol. Displays higher reduction activity in the presence of butanal, followed by acetaldehyde. Has lower activity with hexanal and acetone. In Thermococcus barophilus, this protein is Alcohol dehydrogenase.